Reading from the N-terminus, the 301-residue chain is Pyridoxal 5'-phosphate synthase subunit Pdx1 (301 aa).

Asp-26 contacts D-ribose 5-phosphate. The active-site Schiff-base intermediate with D-ribose 5-phosphate is the Lys-83. Gly-155 provides a ligand contact to D-ribose 5-phosphate. Arg-167 is a binding site for D-glyceraldehyde 3-phosphate. D-ribose 5-phosphate is bound by residues Gly-216 and Gly-237–Ser-238.

Belongs to the PdxS/SNZ family. In terms of assembly, homohexamer and homododecamer. In the presence of Pdx2, forms a dodecamer of heterodimers.

It is found in the cytoplasm. The enzyme catalyses aldehydo-D-ribose 5-phosphate + D-glyceraldehyde 3-phosphate + L-glutamine = pyridoxal 5'-phosphate + L-glutamate + phosphate + 3 H2O + H(+). Its pathway is cofactor biosynthesis; pyridoxal 5'-phosphate biosynthesis. Its function is as follows. Catalyzes the formation of pyridoxal 5'-phosphate from ribose 5-phosphate (RBP), glyceraldehyde 3-phosphate (G3P) and ammonia. The ammonia is provided by Pdx2. Can also use ribulose 5-phosphate and dihydroxyacetone phosphate as substrates, resulting from enzyme-catalyzed isomerization of RBP and G3P, respectively. This chain is Pyridoxal 5'-phosphate synthase subunit Pdx1 (pdx1), found in Plasmodium falciparum (isolate 3D7).